The following is a 454-amino-acid chain: Light-independent protochlorophyllide reductase subunit N (454 aa).

[4Fe-4S] cluster contacts are provided by C22, C47, and C107.

The protein belongs to the BchN/ChlN family. In terms of assembly, protochlorophyllide reductase is composed of three subunits; ChlL, ChlN and ChlB. Forms a heterotetramer of two ChlB and two ChlN subunits. Requires [4Fe-4S] cluster as cofactor.

Its subcellular location is the plastid. The protein resides in the chloroplast. The catalysed reaction is chlorophyllide a + oxidized 2[4Fe-4S]-[ferredoxin] + 2 ADP + 2 phosphate = protochlorophyllide a + reduced 2[4Fe-4S]-[ferredoxin] + 2 ATP + 2 H2O. Its pathway is porphyrin-containing compound metabolism; chlorophyll biosynthesis (light-independent). Its function is as follows. Component of the dark-operative protochlorophyllide reductase (DPOR) that uses Mg-ATP and reduced ferredoxin to reduce ring D of protochlorophyllide (Pchlide) to form chlorophyllide a (Chlide). This reaction is light-independent. The NB-protein (ChlN-ChlB) is the catalytic component of the complex. The polypeptide is Light-independent protochlorophyllide reductase subunit N (Cycas taitungensis (Prince sago)).